The sequence spans 331 residues: Ribose-phosphate pyrophosphokinase (331 aa).

55–57 (DGE) is an ATP binding site. Mg(2+) is bound by residues histidine 148 and aspartate 187. Lysine 211 is an active-site residue. Residues arginine 213, aspartate 237, and 241–245 (DTGGT) contribute to the D-ribose 5-phosphate site.

This sequence belongs to the ribose-phosphate pyrophosphokinase family. Class I subfamily. As to quaternary structure, homohexamer. Mg(2+) is required as a cofactor.

It localises to the cytoplasm. It catalyses the reaction D-ribose 5-phosphate + ATP = 5-phospho-alpha-D-ribose 1-diphosphate + AMP + H(+). The protein operates within metabolic intermediate biosynthesis; 5-phospho-alpha-D-ribose 1-diphosphate biosynthesis; 5-phospho-alpha-D-ribose 1-diphosphate from D-ribose 5-phosphate (route I): step 1/1. Functionally, involved in the biosynthesis of the central metabolite phospho-alpha-D-ribosyl-1-pyrophosphate (PRPP) via the transfer of pyrophosphoryl group from ATP to 1-hydroxyl of ribose-5-phosphate (Rib-5-P). The polypeptide is Ribose-phosphate pyrophosphokinase (Prochlorococcus marinus subsp. pastoris (strain CCMP1986 / NIES-2087 / MED4)).